A 215-amino-acid chain; its full sequence is MPGTLGFRELGQMAYEPVWQAMQRFTNERGTTAPDEIWLVEHPPVFTQGQAGKAEHLLLPGDIPVVQVDRGGQVTYHGPGQLVAYLLLDVRRLGFGVRDLVSRMERCLIELLASYGVTAVAKPDAPGVYIDGAKIASLGLRIRHGCSFHGLALNVDMNLEPFRRINPCGYAGLAMTQLSEHAGSIEFAEVSARLRAQLVKHLDYAEQTTLTGGID.

A BPL/LPL catalytic domain is found at 31–206 (TTAPDEIWLV…QLVKHLDYAE (176 aa)). Residues 70 to 77 (RGGQVTYH), 137 to 139 (SLG), and 150 to 152 (GLA) each bind substrate. Cys168 acts as the Acyl-thioester intermediate in catalysis.

The protein belongs to the LipB family.

It localises to the cytoplasm. The catalysed reaction is octanoyl-[ACP] + L-lysyl-[protein] = N(6)-octanoyl-L-lysyl-[protein] + holo-[ACP] + H(+). The protein operates within protein modification; protein lipoylation via endogenous pathway; protein N(6)-(lipoyl)lysine from octanoyl-[acyl-carrier-protein]: step 1/2. Functionally, catalyzes the transfer of endogenously produced octanoic acid from octanoyl-acyl-carrier-protein onto the lipoyl domains of lipoate-dependent enzymes. Lipoyl-ACP can also act as a substrate although octanoyl-ACP is likely to be the physiological substrate. This chain is Octanoyltransferase, found in Pseudomonas fluorescens (strain Pf0-1).